We begin with the raw amino-acid sequence, 350 residues long: Nicotinate-nucleotide--dimethylbenzimidazole phosphoribosyltransferase (350 aa).

Residue E316 is the Proton acceptor of the active site.

Belongs to the CobT family.

It carries out the reaction 5,6-dimethylbenzimidazole + nicotinate beta-D-ribonucleotide = alpha-ribazole 5'-phosphate + nicotinate + H(+). It functions in the pathway nucleoside biosynthesis; alpha-ribazole biosynthesis; alpha-ribazole from 5,6-dimethylbenzimidazole: step 1/2. In terms of biological role, catalyzes the synthesis of alpha-ribazole-5'-phosphate from nicotinate mononucleotide (NAMN) and 5,6-dimethylbenzimidazole (DMB). This Pseudomonas savastanoi pv. phaseolicola (strain 1448A / Race 6) (Pseudomonas syringae pv. phaseolicola (strain 1448A / Race 6)) protein is Nicotinate-nucleotide--dimethylbenzimidazole phosphoribosyltransferase.